Consider the following 776-residue polypeptide: Cilium assembly protein DZIP1L (776 aa).

The segment at 166 to 189 adopts a C2H2-type zinc-finger fold; it reads HTCHLCDKTFMNATFLRGHIQRRH. Residues 196–450 are a coiled coil; the sequence is GKQKQEQQLG…RKVLAALRNN (255 aa). Phosphoserine is present on residues S425 and S426. The interval 520–776 is disordered; sequence SRAKKRWEGT…SGSRPRIPGW (257 aa). Low complexity predominate over residues 600 to 618; that stretch reads GPSSTPVSPGPGLSTPPFS. Over residues 652–683 the composition is skewed to polar residues; the sequence is WSDSETSEESAQSPGKGSDGLASSATLVQSMV. Over residues 685–694 the composition is skewed to basic and acidic residues; the sequence is NLEKQLETPA. Positions 709-721 are enriched in polar residues; the sequence is TALQRSSTPARKT.

The protein belongs to the DZIP C2H2-type zinc-finger protein family. In terms of assembly, interacts with SEPTIN2.

The protein localises to the cytoplasm. It is found in the cytoskeleton. It localises to the cilium basal body. Its subcellular location is the microtubule organizing center. The protein resides in the centrosome. The protein localises to the centriole. In terms of biological role, involved in primary cilium formation. Probably acts as a transition zone protein required for localization of PKD1/PC1 and PKD2/PC2 to the ciliary membrane. The polypeptide is Cilium assembly protein DZIP1L (Rattus norvegicus (Rat)).